The sequence spans 592 residues: Inactive metallocarboxypeptidase ecm14 (592 aa).

A signal peptide spans 1–22 (MYRQDHVFVVLCAVLLAGQVTA). The propeptide occupies 23–175 (VPAGTGINPH…AIYESRYPTR (153 aa)). The 322-residue stretch at 203 to 524 (HYQPFNVILQ…NSVLVLGHFL (322 aa)) folds into the Peptidase M14 domain. The Zn(2+) site is built by H267 and E270. Substrate is bound by residues 267–270 (HARE), R325, and 342–343 (DR). C336 and C359 are disulfide-bonded. The N-linked (GlcNAc...) asparagine glycan is linked to N383. H399 serves as a coordination point for Zn(2+). Residue 400–401 (SY) coordinates substrate. An N-linked (GlcNAc...) asparagine glycan is attached at N548.

It belongs to the peptidase M14 family. Zn(2+) is required as a cofactor.

Its subcellular location is the vacuole. It is found in the secreted. Its function is as follows. Inactive carboxypeptidase that may play a role in cell wall organization and biogenesis. This Talaromyces stipitatus (strain ATCC 10500 / CBS 375.48 / QM 6759 / NRRL 1006) (Penicillium stipitatum) protein is Inactive metallocarboxypeptidase ecm14 (ecm14).